The sequence spans 2513 residues: MDSVYVDIDADSAFLKALQRAYPMFEVEPKQVTPNDHANARAFSHLAIKLIEQEIDPGSTILGIGSAPARRMMSDRKYHCVCPMRSAEDPERLANYARKLASAAGKVTDKNISGKINDLQAVMAVPNMETSTFCLHTDATCKQRGDVAIYQDVYAVHAPTSLYHQAIKGVHVAYWIGFDTTPFMYNAMAGAYPSYSTNWADEQVLKAKNIGLCSTDLSEGRRGKLSIMRGKKFKPCDRVLFSVGSTLYPESRKLLQSWHLPSVFHLKGKLSFTCRCDTIVSCEGYVVKRVTMSPGIYGKTSGYAVTHHADGFLMCKTTDTVDGERVSFSVCTYVPATICDQMTGILATEVTPEDAQKLLVGLNQRIVVNGRTQRNTNTMKNYLLPIVAQAFSKWAKECRKDMEDEKLLGVRERTLTCCCLWAFRKHKTHTVYKRPDTQSIQKVPAEFDSFVIPSLWSSGLSIPLRTRIKWLLSKAPKHEQLPHSGNAEEAAQAETDAVEEREAELTREAMPPLQATQDDVQVEIDVEQLEDRAGAGIVETPRGAIKVTAQPSDLVVGEYLVLTPQAVLRSQKLGLIHALAEQVKTCTHSGRAGRYAVEAYDGRVLVPSGYAIPQEDFQSLSESATMVFNEREFVNRKLHHIAMHGPALNTDEESYELVRVEKTEHEYVYDVDQKKCCKREEATGLVLVGDLTSPPYHEFAYEGLKIRPACPYKTAVIGVFGVPGSGKSAIIKNLVTRQDLVTSGKKENCQEISNDVMRQRKLEISARTVDSLLLNGCNKPVEVLYVDEAFACHSGTLLALIAMVRPRQKVVLCGDPKQCGFFNMMQMKVNYNHNICTQVYHKSISRRCTLPVTAIVSSLHYESKMRTTNEYNQPIVVDTTGTTKPEPGDLVLTCFRGWVKQLQIDYRGNEVMTAAASQGLTRKGVYAVRQKVNENPLYASTSEHVNVLLTRTEGKLIWKTLSGDPWIKILQNPPKGNFKATIKEWEAEHASIMAGICNYQMAFDTFQNKANVCWAKCLVPILDTAGIKLSDRQWSQIVQAFKEDRAYSPEVALNEICTRIYGVDLDSGLFSKPLISVYYADNHWDNRPGGKMFGFNPEVALMLEKKYPFTKGKWNINKQICITTRKVDEFNPETNIIPANRRLPHSLVAEHHSVRGERMEWLVNKINGHHMLLVSGYNLILPTKRVTWVAPLGTRGADYTYNLELGLPATLGRYDLVVINIHTPFRIHHYQQCVDHAMKLQMLGGDSLRLLKPGGSLLIRAYGYADRTSERVISVLGRKFRSSRALKPQCITSNTEMFFLFSRFDNGRRNFTTHVMNNQLNAVYAGLATRAGCAPSYRVKRMDIAKNTEECVVNAANPRGVPGDGVCKAVYRKWPESFRNSATPVGTAKTIMCGQYPVIHAVGPNFSNYSEAEGDRELASAYREVAKEVSRLGVSSVAIPLLSTGVYSGGKDRLLQSLNHLFAAMDSTDADVVIYCRDKEWEKKITEAISLRSQVELLDDHISVDCDIVRVHPDSSLAGRKGYSTVEGALYSYLEGTRFHQTAVDMAEIYTMWPKQTEANEQVCLYALGESIESVRQKCPVDDADASFPPKTVPCLCRYAMTPERVARLRMNHTTSIIVCSSFPLPKYKIEGVQKVKCSKALLFDHNVPSRVSPRTYRPADEIIQTPQISTEACQDAQLVQSINDEAVPVPSDLEACDATMDWPSIGTVPTRQRHDSFDSEYSSRSNIQLVTADVHAPMYANSLASSGGSMLSLSSEPAQNGIMILPDSEDTDSISRVSTPIAPPRRRLGRTINVTCDEREGKILPMASDRFFTAKPYTVALSVSTADITAYPIQAPLGLTQPPTLEQITFGDFAEGEIDNLLTGALTFGDFEPGEVEELTDSEWSTCSDTDEELRLDRAGGYIFSSDTGQGHLQQKSVRQTTLPVNIVEEVHEEKCYPPKLDETKEQLLLKRLQESASTANRSRYQSRKVENMKATIIHRLKEGCRLYLASDTPRVPSYRITYPAPVYSPSINIKLSNPETAVAVCNEFLARNYPTVASYQVTDEYDAYLDMVDGSESCLDRATFNPSKLRSYPKQHSYHAPTIRSAVPSPFQNTLQNVLAAATKRNCNVTQMRELPTMDSAVFNVECFKKYACNQEYWREFASSPIRVTTENLTMYVTKLKGPKAAALFAKTHNLLPLQEVPMDRFTMDMKRDVKVTPGTKHTEERPKVQVIQAAEPLATAYLCGIHRELVRRLNAVLLPNVHTLFDMSAEDFDAIIATHFKPGDAVLETDIASFDKSQDDSLALTAMMLLEDLGVDQPILDLIEAAFGEISSCHLPTGTRFKFGAMMKSGMFLTLFVNTLLNITIASRVLEERLTTSACAAFIGDDNIIHGVVSDALMAARCATWMNMEVKIIDAVVSEKAPYFCGGFILHDTVTGTSCRVADPLKRLFKLGKPLAAGDEQDEDRRRALADEVTRWQRTGLVTELEKAVYSRYEVQGITAVITSMATFASSKENFKKLRGPVVTLYGGPK.

Positions 28–259 (EPKQVTPNDH…ESRKLLQSWH (232 aa)) constitute an Alphavirus-like MT domain. The nsP1 membrane-binding stretch occupies residues 244 to 263 (GSTLYPESRKLLQSWHLPSV). Residues cysteine 417 and cysteine 419 are each lipidated (S-palmitoyl cysteine; by host). The region spanning 690-842 (DLTSPPYHEF…HNICTQVYHK (153 aa)) is the (+)RNA virus helicase ATP-binding domain. 721–728 (GVPGSGKS) provides a ligand contact to a ribonucleoside 5'-triphosphate. The 149-residue stretch at 843-991 (SISRRCTLPV…IKEWEAEHAS (149 aa)) folds into the (+)RNA virus helicase C-terminal domain. The 324-residue stretch at 1004-1327 (DTFQNKANVC…NQLNAVYAGL (324 aa)) folds into the Peptidase C9 domain. Residues 1005–1024 (TFQNKANVCWAKCLVPILDT) form a nucleolus localization signal region. The active-site For cysteine protease nsP2 activity is cysteine 1013. A Nuclear export signal motif is present at residues 1058-1067 (TRIYGVDLDS). Histidine 1083 serves as the catalytic For cysteine protease nsP2 activity. The Nuclear localization signal signature appears at 1182–1186 (PTKRV). Residues aspartate 1343, asparagine 1357, glycine 1365, glycine 1445, valine 1446, and tyrosine 1447 each contribute to the ADP-D-ribose site. Zn(2+) contacts are provided by cysteine 1595, cysteine 1597, cysteine 1620, and cysteine 1638. Short sequence motifs (FGDF; binding to host G3BP1) lie at residues 1851-1854 (FGDF) and 1869-1872 (FGDF). Residues 2267–2382 (DAVLETDIAS…HGVVSDALMA (116 aa)) form the RdRp catalytic domain.

In terms of assembly, interacts with non-structural protein 3. Interacts with RNA-directed RNA polymerase nsP4. Interacts with protease nsP2. interacts with itself. As to quaternary structure, interacts with mRNA-capping enzyme nsP1. Interacts with host DDX1. Interacts with host DDX3. Interacts (via C-terminus) with host G3BP1; this interaction inhibits the formation of host stress granules on viral mRNAs and the nsp3-G3BP1 complexes bind viral RNAs and probably orchestrate the assembly of viral replication complexes. Interacts (via C-terminus) with host G3BP2; this interaction inhibits the formation of host stress granules on viral mRNAs and the nsp3-G3BP2 complexes bind viral RNAs and probably orchestrate the assembly of viral replication complexes. Interacts with mRNA-capping enzyme nsP1. Interacts with protease nsP2. interacts with itself. In terms of assembly, interacts with RNA-directed RNA polymerase nsP4. Interacts with mRNA-capping enzyme nsP1. Interacts with KPNA1/karyopherin-alpha1; this interaction probably allows the active transport of protease nsP2 into the host nucleus. The cofactor is Mg(2+). Mn(2+) is required as a cofactor. In terms of processing, specific enzymatic cleavages in vivo yield mature proteins. The processing of the polyprotein is temporally regulated. In early stages (1.7 hpi), P1234 is first cleaved in trans through its nsP2 protease activity, releasing P123 and nsP4, which associate to form the early replication complex. At the same time, P1234 is also cut at the nsP1/nsP2 site early in infection but with lower efficiency. After replication of the viral minus-strand RNAs (4 hpi), the polyproteins are cut at the nsP1/nsP2 and nsP2/nsP3 sites very efficiently, preventing accumulation of P123 and P1234 and allowing the formation of the late replication complex. NsP3/nsP4 site is not cleaved anymore and P34 is produced rather than nsP4. Post-translationally, specific enzymatic cleavages in vivo yield mature proteins. The processing of the polyprotein is temporally regulated. In early stages (1.7 hpi), P123 is cleaved at the nsP1/nsP2 site with low efficiency. After replication of the viral minus-strand RNAs (4 hpi), the polyproteins are cut at the nsP1/nsP2 and nsP2/nsP3 sites very efficiently, preventing accumulation of P123 and allowing the formation of the late replication complex. Palmitoylated by host palmitoyltransferases ZDHHC2 and ZDHHC19. In terms of processing, phosphorylated by host on serines and threonines. Post-translationally, ubiquitinated; targets the protein for rapid degradation via the ubiquitin system. Nsp4 is present in extremely low quantities due to low frequency of translation through the amber stop-codon and the degradation by the ubiquitin pathway.

The protein localises to the host cytoplasmic vesicle membrane. The protein resides in the host cell membrane. It localises to the host cell projection. Its subcellular location is the host filopodium. It is found in the host nucleus. The protein localises to the host cytoplasm. It catalyses the reaction GTP + S-adenosyl-L-methionine = N(7)-methyl-GTP + S-adenosyl-L-homocysteine. The enzyme catalyses N(7)-methyl-GTP + L-histidyl-[protein] = N(tele)-(N(7)-methylguanosine 5'-phospho)-L-histidyl-[protein] + diphosphate. It carries out the reaction N(tele)-(N(7)-methylguanosine 5'-phospho)-L-histidyl-[protein] + a 5'-end diphospho-(purine-ribonucleoside) in mRNA + H(+) = a 5'-end (N(7)-methyl 5'-triphosphoguanosine)-(purine-ribonucleoside) in mRNA + L-histidyl-[protein]. The catalysed reaction is a 5'-end triphospho-ribonucleoside in mRNA + H2O = a 5'-end diphospho-ribonucleoside in mRNA + phosphate + H(+). It catalyses the reaction a ribonucleoside 5'-triphosphate + H2O = a ribonucleoside 5'-diphosphate + phosphate + H(+). The enzyme catalyses ATP + H2O = ADP + phosphate + H(+). It carries out the reaction RNA(n) + a ribonucleoside 5'-triphosphate = RNA(n+1) + diphosphate. The catalysed reaction is 4-O-(ADP-D-ribosyl)-L-aspartyl-[protein] + H2O = L-aspartyl-[protein] + ADP-D-ribose + H(+). It catalyses the reaction 5-O-(ADP-D-ribosyl)-L-glutamyl-[protein] + H2O = L-glutamyl-[protein] + ADP-D-ribose + H(+). The enzyme catalyses RNA(n) + ATP = RNA(n)-3'-adenine ribonucleotide + diphosphate. It carries out the reaction ADP-alpha-D-ribose 1''-phosphate + H2O = ADP-D-ribose + phosphate. In terms of biological role, inactive precursor of the viral replicase, which is activated by cleavages carried out by the viral protease nsP2. The early replication complex formed by the polyprotein P123 and nsP4 synthesizes minus-strand RNAs. As soon P123 is cleaved into mature proteins, the plus-strand RNAs synthesis begins. Functionally, cytoplasmic capping enzyme that catalyzes two virus-specific reactions: methyltransferase and nsP1 guanylyltransferase. mRNA-capping is necessary since all viral RNAs are synthesized in the cytoplasm, and host capping enzymes are restricted to the nucleus. The enzymatic reaction involves a covalent link between 7-methyl-GMP and nsP1, whereas eukaryotic capping enzymes form a covalent complex only with GMP. nsP1 capping consists in the following reactions: GTP is first methylated into 7-methyl-GMP and then is covalently linked to nsP1 to form the m7GMp-nsP1 complex from which 7-methyl-GMP complex is transferred to the mRNA to create the cap structure. NsP1 is also needed for the initiation of the minus-strand RNAs synthesis. Probably serves as a membrane anchor for the replication complex composed of nsP1-nsP4. Palmitoylated nsP1 is remodeling host cell cytoskeleton, and induces filopodium-like structure formation at the surface of the host cell. Its function is as follows. Multifunctional protein whose N-terminus is part of the RNA polymerase complex and displays NTPase, RNA triphosphatase and helicase activities. NTPase and RNA triphosphatase are involved in viral RNA capping and helicase keeps a check on the dsRNA replication intermediates. The C-terminus harbors a protease that specifically cleaves the polyproteins and releases the mature proteins. Required for the shutoff of minus-strand RNAs synthesis. Specifically inhibits the host IFN response by promoting the nuclear export of host STAT1. Also inhibits host transcription by inducing the rapid proteasome-dependent degradation of POLR2A, a catalytic subunit of the RNAPII complex. The resulting inhibition of cellular protein synthesis serves to ensure maximal viral gene expression and to evade host immune response. In terms of biological role, seems to be essential for minus-strand RNAs and subgenomic 26S mRNAs synthesis. Displays mono-ADP-ribosylhydrolase activity. ADP-ribosylation is a post-translational modification that controls various processes of the host cell and the virus probably needs to revert it for optimal viral replication. Binds proteins of G3BP family and sequesters them into the viral RNA replication complexes thereby inhibiting the formation of host stress granules on viral mRNAs. The nsp3-G3BP complexes bind viral RNAs and probably orchestrate the assembly of viral replication complexes, thanks to the ability of G3BP family members to self-assemble and bind DNA. RNA dependent RNA polymerase. Replicates genomic and antigenomic RNA by recognizing replications specific signals. The early replication complex formed by the polyprotein P123 and nsP4 synthesizes minus-strand RNAs. The late replication complex composed of fully processed nsP1-nsP4 is responsible for the production of genomic and subgenomic plus-strand RNAs. The protein is Polyprotein P1234 of Anopheles (Human).